The following is a 396-amino-acid chain: Phosphoglycerate kinase (396 aa).

Residues 21 to 23, arginine 36, 59 to 62, arginine 119, and arginine 156 each bind substrate; these read DFN and HLGK. ATP-binding positions include lysine 206, glutamate 325, and 352 to 355; that span reads GGDS.

It belongs to the phosphoglycerate kinase family. As to quaternary structure, monomer.

It localises to the cytoplasm. The enzyme catalyses (2R)-3-phosphoglycerate + ATP = (2R)-3-phospho-glyceroyl phosphate + ADP. It participates in carbohydrate degradation; glycolysis; pyruvate from D-glyceraldehyde 3-phosphate: step 2/5. This is Phosphoglycerate kinase from Macrococcus caseolyticus (strain JCSC5402) (Macrococcoides caseolyticum).